The chain runs to 124 residues: Small ribosomal subunit protein bS6 (124 aa).

The segment at 96-124 is disordered; sequence ETGPSPMMKEVQREEAKKAAAAQPTEAQA. Over residues 114-124 the composition is skewed to low complexity; the sequence is AAAAQPTEAQA.

Belongs to the bacterial ribosomal protein bS6 family.

Binds together with bS18 to 16S ribosomal RNA. The chain is Small ribosomal subunit protein bS6 from Burkholderia mallei (strain ATCC 23344).